Reading from the N-terminus, the 1038-residue chain is Isoleucine--tRNA ligase (1038 aa).

The 'HIGH' region motif lies at 47–57 (PFATGLPHYGH). A 'KMSKS' region motif is present at residues 591–595 (KMSKR). Lys-594 contacts ATP.

The protein belongs to the class-I aminoacyl-tRNA synthetase family. IleS type 2 subfamily. As to quaternary structure, monomer. The cofactor is Zn(2+).

Its subcellular location is the cytoplasm. The enzyme catalyses tRNA(Ile) + L-isoleucine + ATP = L-isoleucyl-tRNA(Ile) + AMP + diphosphate. Catalyzes the attachment of isoleucine to tRNA(Ile). As IleRS can inadvertently accommodate and process structurally similar amino acids such as valine, to avoid such errors it has two additional distinct tRNA(Ile)-dependent editing activities. One activity is designated as 'pretransfer' editing and involves the hydrolysis of activated Val-AMP. The other activity is designated 'posttransfer' editing and involves deacylation of mischarged Val-tRNA(Ile). This is Isoleucine--tRNA ligase from Protochlamydia amoebophila (strain UWE25).